A 153-amino-acid polypeptide reads, in one-letter code: Nucleoside diphosphate kinase (153 aa).

Residues lysine 13, phenylalanine 61, arginine 89, threonine 95, arginine 106, and asparagine 116 each contribute to the ATP site. Histidine 119 acts as the Pros-phosphohistidine intermediate in catalysis.

It belongs to the NDK family. It depends on Mg(2+) as a cofactor. In terms of tissue distribution, highest levels in the liver and kidney with lower levels in the heart, brain and breast muscle.

It localises to the cytoplasm. The protein localises to the cell membrane. The enzyme catalyses a 2'-deoxyribonucleoside 5'-diphosphate + ATP = a 2'-deoxyribonucleoside 5'-triphosphate + ADP. It catalyses the reaction a ribonucleoside 5'-diphosphate + ATP = a ribonucleoside 5'-triphosphate + ADP. Its function is as follows. Major role in the synthesis of nucleoside triphosphates other than ATP. The ATP gamma phosphate is transferred to the NDP beta phosphate via a ping-pong mechanism, using a phosphorylated active-site intermediate. This Columba livia (Rock dove) protein is Nucleoside diphosphate kinase.